Consider the following 85-residue polypeptide: Antitoxin VapB31 (85 aa).

In terms of biological role, antitoxin component of a type II toxin-antitoxin (TA) system. Upon expression in M.smegmatis neutralizes the effect of cognate toxin VapC31. The sequence is that of Antitoxin VapB31 (vapB31) from Mycobacterium tuberculosis (strain ATCC 25618 / H37Rv).